The chain runs to 490 residues: Cardiolipin synthase 1 (490 aa).

Helical transmembrane passes span 9 to 29 (ILTI…FVII) and 42 to 62 (WAWL…YLFL). PLD phosphodiesterase domains lie at 225-252 (MNNR…GDDY) and 403-430 (QNGF…DFRS). Active-site residues include His230, Lys232, Asp237, His408, Lys410, and Asp415.

It belongs to the phospholipase D family. Cardiolipin synthase subfamily.

The protein localises to the cell membrane. The enzyme catalyses 2 a 1,2-diacyl-sn-glycero-3-phospho-(1'-sn-glycerol) = a cardiolipin + glycerol. Its function is as follows. Catalyzes the reversible phosphatidyl group transfer from one phosphatidylglycerol molecule to another to form cardiolipin (CL) (diphosphatidylglycerol) and glycerol. This is Cardiolipin synthase 1 (cls1) from Staphylococcus epidermidis (strain ATCC 12228 / FDA PCI 1200).